Here is a 754-residue protein sequence, read N- to C-terminus: Nitrate reductase (754 aa).

A signal peptide (tat-type signal) is located at residues 1–31 (MKFTRRSFVKASALATAMVAAGCSPQPVAPK). Positions 39 to 95 (ATWYKTVCRYCGVGCGVMVAAKDNRVVAVKGDTENPVNKGLLCVKGYYLDRIMNTEE) constitute a 4Fe-4S Mo/W bis-MGD-type domain. [4Fe-4S] cluster contacts are provided by cysteine 46, cysteine 49, cysteine 53, and cysteine 81. Residues lysine 83, glutamine 144, asparagine 169, cysteine 173, 256 to 258 (GTD), methionine 341, glutamine 345, asparagine 451, lysine 497, aspartate 524, 642 to 651 (TGRILEHWHT), asparagine 728, and lysine 745 contribute to the Mo-bis(molybdopterin guanine dinucleotide) site.

This sequence belongs to the prokaryotic molybdopterin-containing oxidoreductase family. NasA/NapA/NarB subfamily. Component of the nitrate reductase NapAB complex composed of NapA and NapB. Requires [4Fe-4S] cluster as cofactor. Mo-bis(molybdopterin guanine dinucleotide) is required as a cofactor. Predicted to be exported by the Tat system. The position of the signal peptide cleavage has not been experimentally proven.

It is found in the secreted. The enzyme catalyses 2 Fe(II)-[cytochrome] + nitrate + 2 H(+) = 2 Fe(III)-[cytochrome] + nitrite + H2O. In terms of biological role, catalytic subunit of the nitrate reductase complex NapAB. Receives electrons from NapB and catalyzes the reduction of nitrate to nitrite. The protein is Nitrate reductase of Symbiobacterium thermophilum (strain DSM 24528 / JCM 14929 / IAM 14863 / T).